The chain runs to 291 residues: Pantothenate synthetase (291 aa).

30–37 (MGALHAGH) contacts ATP. Residue histidine 37 is the Proton donor of the active site. Glutamine 61 lines the (R)-pantoate pocket. Residue glutamine 61 coordinates beta-alanine. 147–150 (GQKD) contacts ATP. Glutamine 153 contributes to the (R)-pantoate binding site. ATP contacts are provided by residues valine 176 and 184–187 (LSSR).

Belongs to the pantothenate synthetase family. In terms of assembly, homodimer.

Its subcellular location is the cytoplasm. It carries out the reaction (R)-pantoate + beta-alanine + ATP = (R)-pantothenate + AMP + diphosphate + H(+). Its pathway is cofactor biosynthesis; (R)-pantothenate biosynthesis; (R)-pantothenate from (R)-pantoate and beta-alanine: step 1/1. Its function is as follows. Catalyzes the condensation of pantoate with beta-alanine in an ATP-dependent reaction via a pantoyl-adenylate intermediate. This Koribacter versatilis (strain Ellin345) protein is Pantothenate synthetase.